Here is a 485-residue protein sequence, read N- to C-terminus: MALLVEKTTSGREYKVKDMSQADFGRLEIELAEVEMPGLMACRTEFGPSQPFKGAKITGSLHMTIQTAVLIETLTALGAEVRWCSCNIFSTQDHAAAAIARDSAAVFAWKGETLQEYWWCTERALDWGPGGGPDLIVDDGGDATLLIHEGVKAEEEFAKNGTIPDPNSTDNAEFQLVLTIIKESLKTDPLKYTKMKERLVGVSEETTTGVKRLYQMQANGTLLFPAINVNDSVTKSKFDNLYGCRHSLPDGLMRATDVMIAGKVALVAGYGDVGKGCAAALKQAGARVIVTEIDPICALQATMEGLQVLTLEDVVSDVDIFVTTTGNKDIIMVDHMRKMKNNAIVCNIGHFDNEIDMLGLETYPGVKRITIKPQTDRWVFPDTNSGIIVLAEGRLMNLGCATGHPSFVMSCSFTNQVIAQLELWNEKSSGKYEKKVYVLPKHLDEKVAALHLGKLGAKLTKLSKDQADYISVPVEGPYKPAHYRY.

Substrate is bound by residues Thr64, Asp139, and Glu205. 206-208 (TTT) provides a ligand contact to NAD(+). The substrate site is built by Lys235 and Asp239. Residues Asn240, 269-274 (GYGDVG), Glu292, Asn327, 348-350 (IGH), and Asn397 each bind NAD(+).

The protein belongs to the adenosylhomocysteinase family. NAD(+) serves as cofactor.

The catalysed reaction is S-adenosyl-L-homocysteine + H2O = L-homocysteine + adenosine. The protein operates within amino-acid biosynthesis; L-homocysteine biosynthesis; L-homocysteine from S-adenosyl-L-homocysteine: step 1/1. Its function is as follows. Adenosylhomocysteine is a competitive inhibitor of S-adenosyl-L-methionine-dependent methyl transferase reactions; therefore adenosylhomocysteinase may play a key role in the control of methylations via regulation of the intracellular concentration of adenosylhomocysteine. The sequence is that of Adenosylhomocysteinase (SAHH) from Nicotiana sylvestris (Wood tobacco).